Reading from the N-terminus, the 186-residue chain is ADP-ribosylation factor-like protein 8B-A (186 aa).

Positions 1–19 (MLALINRLLDWFKSLFWKE) form an intramembrane region, note=Mediates targeting to membranes. Residues 29 to 35 (QYSGKTT), 71 to 75 (DIGGQ), and 130 to 133 (NKRD) contribute to the GTP site.

It belongs to the small GTPase superfamily. Arf family.

Its subcellular location is the late endosome membrane. It localises to the lysosome membrane. It is found in the cytoplasm. The protein localises to the cytoskeleton. The protein resides in the spindle. Its subcellular location is the early endosome membrane. Small GTPase which cycles between active GTP-bound and inactive GDP-bound states. In its active state, binds to a variety of effector proteins playing a key role in the regulation of lysosomal positioning which is important for nutrient sensing, natural killer cell-mediated cytotoxicity and antigen presentation. Along with its effectors, orchestrates lysosomal transport and fusion. The sequence is that of ADP-ribosylation factor-like protein 8B-A (arl8ba) from Danio rerio (Zebrafish).